Here is a 75-residue protein sequence, read N- to C-terminus: Stewaprin-a (75 aa).

The first 24 residues, 1–24, serve as a signal peptide directing secretion; the sequence is MSSGGLLLLLGLLTLWAELIPVSG. Residues 27–72 enclose the WAP domain; the sequence is HPKKPGLCPPRPQKPPCVRECKNDWSCPGEQKCCRYGCIFECRDPI. 4 disulfide bridges follow: C34/C60, C43/C64, C47/C59, and C53/C68.

It belongs to the venom waprin family. As to expression, expressed by the venom gland.

The protein resides in the secreted. Its function is as follows. Damages membranes of susceptible bacteria. Has no hemolytic activity. Not toxic to mice. Does not inhibit the proteinases elastase and cathepsin G. This chain is Stewaprin-a, found in Hoplocephalus stephensii (Stephens's banded snake).